Consider the following 274-residue polypeptide: MSSLIKEIEEAWQIKDKLFQDSSKLITLKKTLNDIIESLNQGTIRVCEKKENSWEVNEWVKKAILLYFITTESQLYNNNYNSWYDKVAPKFSADTDKNIFKEAAIRKVPGAVVRTGTYIAKNVVIMPSFINIGAYIDEGTMIDTWATIGSCAQIGKNCHISGGTGIGGVLEPLQAKPVIIEDNCFIGARSEIAEGVIVEEGAVISMGVFIGSSTKIIYRDTGEIIYGRIPAYSVVVPGVLPAKEAGKPGLYCVVIIKQVDKATRAKVSINDLLR.

Arginine 106 and aspartate 143 together coordinate substrate.

It belongs to the transferase hexapeptide repeat family. In terms of assembly, homotrimer.

It is found in the cytoplasm. The enzyme catalyses (S)-2,3,4,5-tetrahydrodipicolinate + succinyl-CoA + H2O = (S)-2-succinylamino-6-oxoheptanedioate + CoA. Its pathway is amino-acid biosynthesis; L-lysine biosynthesis via DAP pathway; LL-2,6-diaminopimelate from (S)-tetrahydrodipicolinate (succinylase route): step 1/3. This is 2,3,4,5-tetrahydropyridine-2,6-dicarboxylate N-succinyltransferase from Rickettsia felis (strain ATCC VR-1525 / URRWXCal2) (Rickettsia azadi).